The primary structure comprises 172 residues: Protein-export protein SecB (172 aa).

The interval 152-172 is disordered; it reads AQGAEGGNSGIVMPDGSQARH.

This sequence belongs to the SecB family. As to quaternary structure, homotetramer, a dimer of dimers. One homotetramer interacts with 1 SecA dimer.

The protein resides in the cytoplasm. In terms of biological role, one of the proteins required for the normal export of preproteins out of the cell cytoplasm. It is a molecular chaperone that binds to a subset of precursor proteins, maintaining them in a translocation-competent state. It also specifically binds to its receptor SecA. The sequence is that of Protein-export protein SecB from Cupriavidus necator (strain ATCC 17699 / DSM 428 / KCTC 22496 / NCIMB 10442 / H16 / Stanier 337) (Ralstonia eutropha).